Here is a 306-residue protein sequence, read N- to C-terminus: tRNA dimethylallyltransferase (306 aa).

Residue 14–21 participates in ATP binding; sequence GPTAAGKS. A substrate-binding site is contributed by 16–21; sequence TAAGKS. The segment at 39–42 is interaction with substrate tRNA; it reads DSRL.

The protein belongs to the IPP transferase family. In terms of assembly, monomer. It depends on Mg(2+) as a cofactor.

It catalyses the reaction adenosine(37) in tRNA + dimethylallyl diphosphate = N(6)-dimethylallyladenosine(37) in tRNA + diphosphate. Catalyzes the transfer of a dimethylallyl group onto the adenine at position 37 in tRNAs that read codons beginning with uridine, leading to the formation of N6-(dimethylallyl)adenosine (i(6)A). The protein is tRNA dimethylallyltransferase of Synechococcus sp. (strain ATCC 27144 / PCC 6301 / SAUG 1402/1) (Anacystis nidulans).